Here is a 232-residue protein sequence, read N- to C-terminus: MEVQVWLRWYTRILDDFGFDRRADEESASYLDAFLREHGCLRVDDIDVPSSDFIVFGAGPSLRSHLKRFRALDEPMTVISADGATTALLEEDVLPDIIVTDLDGKMEDIIEANRQGAVVVVHAHGNNLPALRRYLPLLQNIIGTTQSIPHGCLHNFGGFTDGDRAVFLAAALGAGRIVLAGMDFGEVVTRYSRPDMDSELGPADPVKRLKLEYASRLIDWLERNGDVRIERW.

Belongs to the archaeal 6-HMPDK family. Mg(2+) is required as a cofactor.

It carries out the reaction 6-hydroxymethyl-7,8-dihydropterin + ATP = (7,8-dihydropterin-6-yl)methyl diphosphate + AMP + H(+). It functions in the pathway cofactor biosynthesis; 5,6,7,8-tetrahydromethanopterin biosynthesis. Catalyzes the transfer of diphosphate from ATP to 6-hydroxymethyl-7,8-dihydropterin (6-HMD), leading to 6-hydroxymethyl-7,8-dihydropterin diphosphate (6-HMDP). This Methanothermobacter thermautotrophicus (strain ATCC 29096 / DSM 1053 / JCM 10044 / NBRC 100330 / Delta H) (Methanobacterium thermoautotrophicum) protein is 6-hydroxymethyl-7,8-dihydropterin pyrophosphokinase.